Consider the following 110-residue polypeptide: MSRAIIKFIRLSPTKARLIADEVQGMNAELALASLSFMPNRGAKYIASAISSAVANGGFEPEEVVVKSCRVDAGPVLKRFRPRARGSASRIRKPTSHILVEVSKPESKEA.

It belongs to the universal ribosomal protein uL22 family. Part of the 50S ribosomal subunit.

Its function is as follows. This protein binds specifically to 23S rRNA; its binding is stimulated by other ribosomal proteins, e.g. L4, L17, and L20. It is important during the early stages of 50S assembly. It makes multiple contacts with different domains of the 23S rRNA in the assembled 50S subunit and ribosome. Functionally, the globular domain of the protein is located near the polypeptide exit tunnel on the outside of the subunit, while an extended beta-hairpin is found that lines the wall of the exit tunnel in the center of the 70S ribosome. The protein is Large ribosomal subunit protein uL22 of Campylobacter fetus subsp. fetus (strain 82-40).